Reading from the N-terminus, the 322-residue chain is Acetyl-coenzyme A carboxylase carboxyl transferase subunit alpha (322 aa).

In terms of domain architecture, CoA carboxyltransferase C-terminal spans 30–293 (AVDISAEILR…KKALQDSLKL (264 aa)).

This sequence belongs to the AccA family. As to quaternary structure, acetyl-CoA carboxylase is a heterohexamer composed of biotin carboxyl carrier protein (AccB), biotin carboxylase (AccC) and two subunits each of ACCase subunit alpha (AccA) and ACCase subunit beta (AccD).

It is found in the cytoplasm. It carries out the reaction N(6)-carboxybiotinyl-L-lysyl-[protein] + acetyl-CoA = N(6)-biotinyl-L-lysyl-[protein] + malonyl-CoA. It participates in lipid metabolism; malonyl-CoA biosynthesis; malonyl-CoA from acetyl-CoA: step 1/1. Its function is as follows. Component of the acetyl coenzyme A carboxylase (ACC) complex. First, biotin carboxylase catalyzes the carboxylation of biotin on its carrier protein (BCCP) and then the CO(2) group is transferred by the carboxyltransferase to acetyl-CoA to form malonyl-CoA. The protein is Acetyl-coenzyme A carboxylase carboxyl transferase subunit alpha of Nitrosospira multiformis (strain ATCC 25196 / NCIMB 11849 / C 71).